Consider the following 1077-residue polypeptide: Hemoglobin and hemoglobin-haptoglobin-binding protein A (1077 aa).

Residues 1 to 24 (MTNFRLNVLAYSVMLGLTASVAYA) form the signal peptide. A disordered region spans residues 25–72 (EPTNQPTNQPTNQPTNQPTNQPTNQPTNQPTNQPTNQPTNQPTNQNSN). Tandem repeats lie at residues 26 to 29 (PTNQ), 30 to 33 (PTNQ), 34 to 37 (PTNQ), 38 to 41 (PTNQ), 42 to 45 (PTNQ), 46 to 49 (PTNQ), 50 to 53 (PTNQ), 54 to 57 (PTNQ), 58 to 61 (PTNQ), 62 to 65 (PTNQ), and 66 to 69 (PTNQ). The interval 26–69 (PTNQPTNQPTNQPTNQPTNQPTNQPTNQPTNQPTNQPTNQPTNQ) is 11 X 4 AA tandem repeats of P-T-N-Q. Residues 26–70 (PTNQPTNQPTNQPTNQPTNQPTNQPTNQPTNQPTNQPTNQPTNQN) show a composition bias toward low complexity. The short motif at 78–85 (EQINVSGS) is the TonB box element. The region spanning 89–216 (TDTKAPPKIA…LGGSVSLDTK (128 aa)) is the TBDR plug domain. One can recognise a TBDR beta-barrel domain in the interval 224–1077 (NKNYYASYKR…NYRMSVQFEF (854 aa)). The short motif at 1060–1077 (NRFYAPERNYRMSVQFEF) is the TonB C-terminal box element.

It belongs to the TonB-dependent receptor family. Hemoglobin/haptoglobin binding protein subfamily.

The protein resides in the cell outer membrane. Its function is as follows. Acts as a receptor for hemoglobin or the hemoglobin/haptoglobin complex of the human host and is required for heme uptake. This Haemophilus influenzae protein is Hemoglobin and hemoglobin-haptoglobin-binding protein A (hgpA).